The chain runs to 427 residues: Trigger factor (427 aa).

The PPIase FKBP-type domain maps to 163–248 (GDTVVIDFVG…IHEVKAKEVP (86 aa)).

Belongs to the FKBP-type PPIase family. Tig subfamily.

The protein localises to the cytoplasm. It carries out the reaction [protein]-peptidylproline (omega=180) = [protein]-peptidylproline (omega=0). Its function is as follows. Involved in protein export. Acts as a chaperone by maintaining the newly synthesized protein in an open conformation. Functions as a peptidyl-prolyl cis-trans isomerase. This is Trigger factor from Streptococcus pneumoniae serotype 4 (strain ATCC BAA-334 / TIGR4).